The chain runs to 1510 residues: Chromosome partition protein MukB (1510 aa).

Residues glutamate 6–aspartate 30 adopt a coiled-coil conformation. Glycine 75–serine 82 serves as a coordination point for ATP. 7 coiled-coil regions span residues glutamine 346–serine 506, glutamine 553–serine 611, methionine 673–glutamine 706, serine 821–alanine 846, glutamate 876–glutamine 1064, glutamate 1094–valine 1149, and aspartate 1249–isoleucine 1304. Residues proline 707–arginine 824 are flexible hinge.

Belongs to the SMC family. MukB subfamily. As to quaternary structure, homodimerization via its hinge domain. Binds to DNA via its C-terminal region. Interacts, and probably forms a ternary complex, with MukE and MukF via its C-terminal region. The complex formation is stimulated by calcium or magnesium. Interacts with tubulin-related protein FtsZ.

It is found in the cytoplasm. It localises to the nucleoid. In terms of biological role, plays a central role in chromosome condensation, segregation and cell cycle progression. Functions as a homodimer, which is essential for chromosome partition. Involved in negative DNA supercoiling in vivo, and by this means organize and compact chromosomes. May achieve or facilitate chromosome segregation by condensation DNA from both sides of a centrally located replisome during cell division. In Haemophilus influenzae (strain PittGG), this protein is Chromosome partition protein MukB.